We begin with the raw amino-acid sequence, 496 residues long: Probable CtpA-like serine protease (496 aa).

Residues 1-16 show a composition bias toward basic and acidic residues; sequence MDDKQHTTSSDDERAE. Residues 1–27 form a disordered region; it reads MDDKQHTTSSDDERAENATSNQDQQTN. Residues 17–27 are compositionally biased toward polar residues; the sequence is NATSNQDQQTN. The chain crosses the membrane as a helical span at residues 39–59; sequence FISILIGTIIITAVITVVAYI. The region spanning 124 to 206 is the PDZ domain; the sequence is TKSFNEGVSG…TEVTLTVQRG (83 aa). Catalysis depends on charge relay system residues Ser329, Asp340, and Lys354.

This sequence belongs to the peptidase S41A family.

It is found in the cell membrane. This Staphylococcus aureus (strain MRSA252) protein is Probable CtpA-like serine protease.